The sequence spans 492 residues: Stomatal closure-related actin-binding protein 2 (492 aa).

Residues 112 to 132 adopt a coiled-coil conformation; it reads LKKLRDALETMRGRMDGRNRE.

The protein belongs to the SCAB family. Expressed in roots, stems, leaves, siliques and flowers.

Its subcellular location is the cytoplasm. It is found in the cytoskeleton. Probable plant-specific actin binding protein that bundles and stabilizes microfilaments (MFs). The protein is Stomatal closure-related actin-binding protein 2 of Arabidopsis thaliana (Mouse-ear cress).